The sequence spans 532 residues: Gag-Pol polyprotein (532 aa).

The N-myristoyl glycine; by host moiety is linked to residue G2. The segment at V7–L31 is interaction with Gp41. Residues L8 to R43 form an interaction with host CALM1 region. The tract at residues E12 to I19 is interaction with host AP3D1. The interaction with membrane phosphatidylinositol 4,5-bisphosphate and RNA stretch occupies residues D14–H33. The Nuclear export signal signature appears at W16–R22. Residues K26–K32 carry the Nuclear localization signal motif. Residues E73–S77 form an interaction with membrane phosphatidylinositol 4,5-bisphosphate region. Positions E106–K127 are disordered. Residue Y132 is modified to Phosphotyrosine; by host. Residues N189–Q227 are interaction with human PPIA/CYPA and NUP153. The segment at Y277–L363 is dimerization/Multimerization of capsid protein p24. 2 CCHC-type zinc fingers span residues I390–A407 and K411–E428. Residues E447–Q481 form a disordered region. Residues S450–S459 are compositionally biased toward polar residues. Residues P489–L493 form a dimerization of protease region. A Peptidase A2 domain is found at K508–P532. Residue D513 is the For protease activity; shared with dimeric partner of the active site.

In terms of assembly, homotrimer; further assembles as hexamers of trimers. Interacts with gp41 (via C-terminus). Interacts with host CALM1; this interaction induces a conformational change in the Matrix protein, triggering exposure of the myristate group. Interacts with host AP3D1; this interaction allows the polyprotein trafficking to multivesicular bodies during virus assembly. Part of the pre-integration complex (PIC) which is composed of viral genome, matrix protein, Vpr and integrase. As to quaternary structure, homodimer; the homodimer further multimerizes as homohexamers or homopentamers. Interacts with human PPIA/CYPA; This interaction stabilizes the capsid. Interacts with human NUP153. Interacts with host PDZD8; this interaction stabilizes the capsid. Interacts with monkey TRIM5; this interaction destabilizes the capsid. Homodimer, whose active site consists of two apposed aspartic acid residues. In terms of processing, specific enzymatic cleavages by the viral protease yield mature proteins. The protease is released by autocatalytic cleavage. The polyprotein is cleaved during and after budding, this process is termed maturation. Proteolytic cleavage of p66 RT removes the RNase H domain to yield the p51 RT subunit. Nucleocapsid protein p7 might be further cleaved after virus entry. Tyrosine phosphorylated presumably in the virion by a host kinase. Phosphorylation is apparently not a major regulator of membrane association. Post-translationally, phosphorylated possibly by host MAPK1; this phosphorylation is necessary for Pin1-mediated virion uncoating. In terms of processing, methylated by host PRMT6, impairing its function by reducing RNA annealing and the initiation of reverse transcription.

The protein localises to the host cell membrane. Its subcellular location is the host endosome. It localises to the host multivesicular body. The protein resides in the virion membrane. It is found in the host nucleus. The protein localises to the host cytoplasm. Its subcellular location is the virion. It catalyses the reaction Specific for a P1 residue that is hydrophobic, and P1' variable, but often Pro.. Its activity is regulated as follows. The viral protease is inhibited by many synthetic protease inhibitors (PIs), such as amprenavir, atazanavir, indinavir, loprinavir, nelfinavir, ritonavir and saquinavir. Use of protease inhibitors in tritherapy regimens permit more ambitious therapeutic strategies. Mediates, with Gag polyprotein, the essential events in virion assembly, including binding the plasma membrane, making the protein-protein interactions necessary to create spherical particles, recruiting the viral Env proteins, and packaging the genomic RNA via direct interactions with the RNA packaging sequence (Psi). Gag-Pol polyprotein may regulate its own translation, by the binding genomic RNA in the 5'-UTR. At low concentration, the polyprotein would promote translation, whereas at high concentration, the polyprotein would encapsidate genomic RNA and then shut off translation. Functionally, targets the polyprotein to the plasma membrane via a multipartite membrane-binding signal, that includes its myristoylated N-terminus. Matrix protein is part of the pre-integration complex. Implicated in the release from host cell mediated by Vpu. Binds to RNA. Its function is as follows. Forms the conical core that encapsulates the genomic RNA-nucleocapsid complex in the virion. Most core are conical, with only 7% tubular. The core is constituted by capsid protein hexamer subunits. The core is disassembled soon after virion entry. Host restriction factors such as TRIM5-alpha or TRIMCyp bind retroviral capsids and cause premature capsid disassembly, leading to blocks in reverse transcription. Capsid restriction by TRIM5 is one of the factors which restricts HIV-1 to the human species. Host PIN1 apparently facilitates the virion uncoating. On the other hand, interactions with PDZD8 or CYPA stabilize the capsid. In terms of biological role, encapsulates and protects viral dimeric unspliced genomic RNA (gRNA). Binds these RNAs through its zinc fingers. Acts as a nucleic acid chaperone which is involved in rearangement of nucleic acid secondary structure during gRNA retrotranscription. Also facilitates template switch leading to recombination. As part of the polyprotein, participates in gRNA dimerization, packaging, tRNA incorporation and virion assembly. Aspartyl protease that mediates proteolytic cleavages of Gag and Gag-Pol polyproteins during or shortly after the release of the virion from the plasma membrane. Cleavages take place as an ordered, step-wise cascade to yield mature proteins. This process is called maturation. Displays maximal activity during the budding process just prior to particle release from the cell. Also cleaves Nef and Vif, probably concomitantly with viral structural proteins on maturation of virus particles. Hydrolyzes host EIF4GI and PABP1 in order to shut off the capped cellular mRNA translation. The resulting inhibition of cellular protein synthesis serves to ensure maximal viral gene expression and to evade host immune response. Also mediates cleavage of host YTHDF3. Mediates cleavage of host CARD8, thereby activating the CARD8 inflammasome, leading to the clearance of latent HIV-1 in patient CD4(+) T-cells after viral reactivation; in contrast, HIV-1 can evade CARD8-sensing when its protease remains inactive in infected cells prior to viral budding. The chain is Gag-Pol polyprotein (gag-pol) from Homo sapiens (Human).